The primary structure comprises 104 residues: uncharacterized protein (104 aa).

Over residues 58 to 71 (PERDRARRDRDHHP) the composition is skewed to basic and acidic residues. A disordered region spans residues 58–84 (PERDRARRDRDHHPWSRSRSQLSPRMA).

This is an uncharacterized protein from Mycobacterium tuberculosis (strain ATCC 25618 / H37Rv).